We begin with the raw amino-acid sequence, 333 residues long: Biotin synthase (333 aa).

Residues 46-275 (YYGKKVKLNM…TKEIRISGGR (230 aa)) form the Radical SAM core domain. The [4Fe-4S] cluster site is built by cysteine 64, cysteine 68, and cysteine 71. Residues cysteine 108, cysteine 140, cysteine 200, and arginine 270 each contribute to the [2Fe-2S] cluster site.

The protein belongs to the radical SAM superfamily. Biotin synthase family. As to quaternary structure, homodimer. It depends on [4Fe-4S] cluster as a cofactor. The cofactor is [2Fe-2S] cluster.

The catalysed reaction is (4R,5S)-dethiobiotin + (sulfur carrier)-SH + 2 reduced [2Fe-2S]-[ferredoxin] + 2 S-adenosyl-L-methionine = (sulfur carrier)-H + biotin + 2 5'-deoxyadenosine + 2 L-methionine + 2 oxidized [2Fe-2S]-[ferredoxin]. The protein operates within cofactor biosynthesis; biotin biosynthesis; biotin from 7,8-diaminononanoate: step 2/2. Its function is as follows. Catalyzes the conversion of dethiobiotin (DTB) to biotin by the insertion of a sulfur atom into dethiobiotin via a radical-based mechanism. The sequence is that of Biotin synthase from Halalkalibacterium halodurans (strain ATCC BAA-125 / DSM 18197 / FERM 7344 / JCM 9153 / C-125) (Bacillus halodurans).